Consider the following 439-residue polypeptide: DNA damage-inducible protein 1 (439 aa).

In terms of domain architecture, Ubiquitin-like spans 1 to 82 (MQITIAIQDT…LALHVRETQR (82 aa)). A disordered region spans residues 82–101 (RATAVPESQQGRPAAPPQQD). The active site involves Asp220. The segment at 333-398 (QDEPTIEGPG…PAPRAPQARS (66 aa)) is disordered. Low complexity-rich tracts occupy residues 364-375 (GQAGPSTAAQPG) and 383-398 (PASASAPAPRAPQARS). The UBA domain maps to 398–438 (SFPREHIEQLVALGADEQKAIRALEATDGNVEYAASLIFEG).

This sequence belongs to the DDI1 family. In terms of assembly, binds ubiquitin and polyubiquitinated proteins.

The protein resides in the cytoplasm. Functionally, probable aspartic protease. May be involved in the regulation of exocytosis. Acts as a linker between the 19S proteasome and polyubiquitinated proteins via UBA domain interactions with ubiquitin for their subsequent degradation. Required for S-phase checkpoint control. This Neurospora crassa (strain ATCC 24698 / 74-OR23-1A / CBS 708.71 / DSM 1257 / FGSC 987) protein is DNA damage-inducible protein 1 (ddi-1).